The primary structure comprises 200 residues: Serine/threonine-protein kinase mos (200 aa).

Residues 2–200 (LCLLQPLGSG…ELLKGERVTA (199 aa)) form the Protein kinase domain. ATP is bound by residues 8–16 (LGSGGFGSV) and K29. Residue D143 is the Proton acceptor of the active site.

Belongs to the protein kinase superfamily. Ser/Thr protein kinase family.

It carries out the reaction L-seryl-[protein] + ATP = O-phospho-L-seryl-[protein] + ADP + H(+). The enzyme catalyses L-threonyl-[protein] + ATP = O-phospho-L-threonyl-[protein] + ADP + H(+). This chain is Serine/threonine-protein kinase mos (MOS), found in Apteryx australis (Southern brown kiwi).